A 179-amino-acid chain; its full sequence is MTLTSAEKEMSGVLTFFQKEIRGFRTGKAHPALVETVTVEVYGTTMRLSDIASISVSDTRQLLISPYDAGNVSAISKGILAANLNLQPIVEGATVRINVPEPTEEYRREVIKQLKRKSEEAKVSIRNIRRTCNDRLKKDDSLTEDAVKGLEKKIQELTDKFCKQIEELAKQKEAELSSI.

This sequence belongs to the RRF family.

It is found in the cytoplasm. Functionally, responsible for the release of ribosomes from messenger RNA at the termination of protein biosynthesis. May increase the efficiency of translation by recycling ribosomes from one round of translation to another. In Chlamydia muridarum (strain MoPn / Nigg), this protein is Ribosome-recycling factor.